The sequence spans 215 residues: Pyrrolidone-carboxylate peptidase (215 aa).

Catalysis depends on residues E81, C144, and H168.

It belongs to the peptidase C15 family. Homotetramer.

The protein resides in the cytoplasm. It carries out the reaction Release of an N-terminal pyroglutamyl group from a polypeptide, the second amino acid generally not being Pro.. Functionally, removes 5-oxoproline from various penultimate amino acid residues except L-proline. The polypeptide is Pyrrolidone-carboxylate peptidase (Bacillus velezensis (strain DSM 23117 / BGSC 10A6 / LMG 26770 / FZB42) (Bacillus amyloliquefaciens subsp. plantarum)).